The primary structure comprises 990 residues: Sister chromatid cohesion protein PDS5 homolog E (990 aa).

HEAT repeat units lie at residues 31 to 57, 58 to 96, 153 to 190, 191 to 228, and 232 to 269; these read DATL…SVQK, ALHP…ITAP, DLVL…DESE, EVPM…SCTC, and PCIM…HNDV. The segment at 262–565 is disordered; that stretch reads TTQAHNDVKP…AGEEVESNTN (304 aa). Basic and acidic residues predominate over residues 267–281; that stretch reads NDVKPKDNEADEKIS. The segment covering 302–314 has biased composition (basic residues); the sequence is KGTRSKRSARGGT. 2 stretches are compositionally biased toward polar residues: residues 328–342 and 394–410; these read EGLS…ASGS and VGQT…SSGR. 3 stretches are compositionally biased toward basic and acidic residues: residues 421–430, 448–477, and 503–512; these read TKMEETDHDV, PAKE…EKAD, and VHSDAKKKNS. Residues 458–465 carry the Nuclear localization signal 1 motif; the sequence is VKKHEDGI. Short sequence motifs (nuclear localization signal) lie at residues 539–546 and 583–590; these read TKKSEQAP and DKKFYEGV. Positions 653–966 are disordered; sequence KKRKIVSKNV…VGNEAEEDDQ (314 aa). Residues 662-673 show a composition bias toward low complexity; it reads VEPSSSPEVRSS. 2 consecutive short sequence motifs (nuclear localization signal) follow at residues 677-684 and 715-722; these read MKKKDSVT and LKKLNGEP. The span at 727-742 shows a compositional bias: basic residues; the sequence is GRTGKKQKVTQAMHRK. Residues 746 to 760 show a composition bias toward acidic residues; the sequence is DCDEQEDLETKDEED. Composition is skewed to basic and acidic residues over residues 761 to 810, 819 to 890, and 898 to 947; these read SLKL…KTNG, TDGK…KETN, and EEQK…DKET.

The protein belongs to the PDS5 family. Interacts with the cohesin complex.

It localises to the nucleus. Cohesin cofactor dispensable during the meiotic division but playing an important role in DNA repair by homologous recombination (HR) probably by helping SMC5/SMC6 complex. Regulator of sister chromatid cohesion in mitosis which may stabilize cohesin complex association with chromatin. May couple sister chromatid cohesion during mitosis to DNA replication. Cohesion ensures that chromosome partitioning is accurate in both meiotic and mitotic cells and plays an important role in DNA repair. The sequence is that of Sister chromatid cohesion protein PDS5 homolog E from Arabidopsis thaliana (Mouse-ear cress).